The primary structure comprises 412 residues: Multidrug resistance protein MdtG (412 aa).

Helical transmembrane passes span 20-40 (LFVA…IMPF), 62-82 (LVFS…GGLA), 96-116 (LGMS…QFLI), 119-139 (ALLG…ATQI), 150-170 (TLST…GLLA), 177-197 (PVFF…LYFI), 225-245 (VLCL…IAPI), 260-280 (LAFI…MSAP), 294-314 (ILVA…LVQT), and 382-402 (TVFF…YWCL).

Belongs to the major facilitator superfamily. DHA1 family. MdtG (TC 2.A.1.2.20) subfamily.

The protein localises to the cell inner membrane. The sequence is that of Multidrug resistance protein MdtG from Rahnella sp. (strain Y9602).